A 531-amino-acid chain; its full sequence is Bifunctional protein TrpGD (531 aa).

One can recognise a Glutamine amidotransferase type-1 domain in the interval 3–196; the sequence is DILLLDNIDS…LAWAQQKLEP (194 aa). 57 to 59 serves as a coordination point for L-glutamine; the sequence is GPG. Residue cysteine 84 is the Nucleophile; for GATase activity of the active site. L-glutamine is bound by residues glutamine 88 and 134–135; that span reads SL. Catalysis depends on for GATase activity residues histidine 170 and glutamate 172. The interval 202 to 531 is anthranilate phosphoribosyltransferase; sequence PILEKLYQAQ…DRVTALAARG (330 aa).

It in the C-terminal section; belongs to the anthranilate phosphoribosyltransferase family. In terms of assembly, heterotetramer consisting of two non-identical subunits: a beta subunit (TrpG) and a large alpha subunit (TrpE).

The enzyme catalyses chorismate + L-glutamine = anthranilate + pyruvate + L-glutamate + H(+). It catalyses the reaction N-(5-phospho-beta-D-ribosyl)anthranilate + diphosphate = 5-phospho-alpha-D-ribose 1-diphosphate + anthranilate. It functions in the pathway amino-acid biosynthesis; L-tryptophan biosynthesis; L-tryptophan from chorismate: step 1/5. The protein operates within amino-acid biosynthesis; L-tryptophan biosynthesis; L-tryptophan from chorismate: step 2/5. Cooperatively feedback inhibited by tryptophan. In terms of biological role, part of a heterotetrameric complex that catalyzes the two-step biosynthesis of anthranilate, an intermediate in the biosynthesis of L-tryptophan. In the first step, the glutamine-binding beta subunit (TrpG) of anthranilate synthase (AS) provides the glutamine amidotransferase activity which generates ammonia as a substrate that, along with chorismate, is used in the second step, catalyzed by the large alpha subunit of AS (TrpE) to produce anthranilate. In the absence of TrpG, TrpE can synthesize anthranilate directly from chorismate and high concentrations of ammonia. In addition to synthesizing anthranilate, it also catalyzes the second step of the pathway, the transfer of the phosphoribosyl group of 5-phosphorylribose-1-pyrophosphate (PRPP) to anthranilate. This Escherichia coli (strain K12) protein is Bifunctional protein TrpGD (trpGD).